The sequence spans 59 residues: MAVPKRKTSPSRRGMRRSHDALSAEAFHECSNCGELKRPHMLCNACGHYNGREVIAVGL.

Over residues 1–16 the composition is skewed to basic residues; the sequence is MAVPKRKTSPSRRGMR. Residues 1-20 form a disordered region; sequence MAVPKRKTSPSRRGMRRSHD.

Belongs to the bacterial ribosomal protein bL32 family.

In Novosphingobium aromaticivorans (strain ATCC 700278 / DSM 12444 / CCUG 56034 / CIP 105152 / NBRC 16084 / F199), this protein is Large ribosomal subunit protein bL32.